A 359-amino-acid polypeptide reads, in one-letter code: 3-dehydroquinate synthase (359 aa).

Residues 69–74, 103–107, 127–128, Lys-140, Lys-149, and 167–170 contribute to the NAD(+) site; these read DGEKYK, GVVGD, TT, and TLDT. Residues Glu-182, His-245, and His-262 each contribute to the Zn(2+) site.

This sequence belongs to the sugar phosphate cyclases superfamily. Dehydroquinate synthase family. It depends on Co(2+) as a cofactor. The cofactor is Zn(2+). NAD(+) serves as cofactor.

The protein resides in the cytoplasm. The enzyme catalyses 7-phospho-2-dehydro-3-deoxy-D-arabino-heptonate = 3-dehydroquinate + phosphate. Its pathway is metabolic intermediate biosynthesis; chorismate biosynthesis; chorismate from D-erythrose 4-phosphate and phosphoenolpyruvate: step 2/7. Its function is as follows. Catalyzes the conversion of 3-deoxy-D-arabino-heptulosonate 7-phosphate (DAHP) to dehydroquinate (DHQ). This Ruthia magnifica subsp. Calyptogena magnifica protein is 3-dehydroquinate synthase.